The chain runs to 1125 residues: tRNA (34-2'-O)-methyltransferase regulator WDR6 (1125 aa).

An N-acetylmethionine modification is found at Met1. WD repeat units follow at residues Val53 to Val97, Arg105 to Pro143, Cys147 to Pro189, Ala200 to Val238, Arg247 to His285, Ile289 to Leu327, Leu335 to Leu376, Trp381 to Ile422, Pro425 to Ala470, Ile476 to Val520, Pro559 to Gly598, Val604 to Pro642, His645 to Ala684, Leu739 to Val785, Arg848 to Leu897, His905 to Leu950, Gly974 to Leu1016, Glu1040 to Leu1077, and Thr1083 to Asp1125.

Belongs to the WD repeat WDR6 family. Interacts with FTSJ1; the interaction is direct, and required for 2'-O-methylation of position 34 in substrate tRNAs. Interacts with IRS4. Interacts with STK11/LKB1.

Its subcellular location is the cytoplasm. In terms of biological role, together with methyltransferase FTSJ1, methylates the 2'-O-ribose of nucleotides at position 34 of the tRNA anticodon loop of substrate tRNAs. Required for the correct positioning of the substrate tRNA for methylation. Required to suppress amino acid starvation-induced autophagy. Enhances the STK11/LKB1-induced cell growth suppression activity. The protein is tRNA (34-2'-O)-methyltransferase regulator WDR6 (Wdr6) of Mus musculus (Mouse).